The following is a 158-amino-acid chain: Transcription factor BTF3 homolog 4 (158 aa).

Residue Lys-5 is modified to N6-methyllysine. An NAC-A/B domain is found at 33–98 (TADDKKLQSS…AEAKPITEML (66 aa)). Thr-111 is modified (phosphothreonine). A disordered region spans residues 123-158 (QVLDSKTPKPEDIDEEEDDVPDLVENFDEASKNEAN). The span at 134 to 150 (DIDEEEDDVPDLVENFD) shows a compositional bias: acidic residues.

It belongs to the NAC-beta family.

The polypeptide is Transcription factor BTF3 homolog 4 (BTF3L4) (Bos taurus (Bovine)).